A 499-amino-acid polypeptide reads, in one-letter code: Cysteine--tRNA ligase (499 aa).

Residue C31 coordinates Zn(2+). Positions 33 to 43 (VTVYDLCHLGH) match the 'HIGH' region motif. The Zn(2+) site is built by C215, H240, and E244. Positions 272–276 (KMSKS) match the 'KMSKS' region motif. K275 serves as a coordination point for ATP.

This sequence belongs to the class-I aminoacyl-tRNA synthetase family. In terms of assembly, monomer. Zn(2+) serves as cofactor.

It localises to the cytoplasm. It carries out the reaction tRNA(Cys) + L-cysteine + ATP = L-cysteinyl-tRNA(Cys) + AMP + diphosphate. This chain is Cysteine--tRNA ligase, found in Synechococcus sp. (strain WH7803).